Consider the following 1422-residue polypeptide: Cardiac-enriched FHL2-interacting protein (1422 aa).

Positions Met-1–Glu-23 are disordered. Thr-119 is subject to Phosphothreonine. Disordered stretches follow at residues Arg-151–His-177, Ala-199–Lys-265, Ser-279–Phe-443, Leu-459–Ser-500, Tyr-516–Gln-718, Phe-731–His-850, Val-877–Arg-1127, Thr-1142–Pro-1244, and Arg-1353–Ser-1422. The segment covering Val-201–Gln-210 has biased composition (polar residues). 2 stretches are compositionally biased toward basic and acidic residues: residues Trp-284 to Thr-298 and Lys-305 to Leu-315. The residue at position 327 (Ser-327) is a Phosphoserine. Polar residues predominate over residues Ser-342–Gly-351. Residues Gly-395–Gln-405 show a composition bias toward basic and acidic residues. Positions Thr-461–Ser-470 are enriched in polar residues. Ser-472 carries the phosphoserine modification. 3 stretches are compositionally biased toward basic and acidic residues: residues Gln-481–Lys-495, Gly-524–Gln-537, and Pro-579–Ala-588. Over residues Ser-590–Ser-606 the composition is skewed to low complexity. Basic and acidic residues-rich tracts occupy residues Ala-611–Ala-622, Trp-635–Pro-644, and Cys-653–Leu-675. Residues Phe-731–Glu-744 show a composition bias toward low complexity. Over residues Gly-790 to Arg-801 the composition is skewed to basic and acidic residues. Ser-815 is modified (phosphoserine). Over residues Ala-828–Asp-839 the composition is skewed to basic and acidic residues. 2 stretches are compositionally biased toward polar residues: residues Ser-907–Gln-926 and Gln-944–Gly-954. Residues Ala-975 to Lys-991 are compositionally biased toward basic and acidic residues. Residues Ala-1048 to Ala-1067 show a composition bias toward polar residues. A compositionally biased stretch (pro residues) spans Pro-1087–Ser-1099. Residues Arg-1173–Lys-1184 are compositionally biased toward basic residues. Over residues Ser-1185–Thr-1202 the composition is skewed to basic and acidic residues. The span at Arg-1353 to Ala-1366 shows a compositional bias: polar residues. The span at Asp-1411–Ser-1422 shows a compositional bias: acidic residues.

As to quaternary structure, interacts with FHL2.

The protein localises to the cytoplasm. It localises to the myofibril. It is found in the sarcomere. Its subcellular location is the z line. Plays an important role in cardiomyocyte hypertrophy via activation of the calcineurin/NFAT signaling pathway. This chain is Cardiac-enriched FHL2-interacting protein, found in Rattus norvegicus (Rat).